The primary structure comprises 245 residues: Transmembrane protein 116 (245 aa).

4 consecutive transmembrane segments (helical) span residues 24–44 (MAFV…FCLG), 88–108 (GIAI…VLLI), 141–161 (FYPV…IIKL), and 173–195 (LYVL…YGWT).

It is found in the membrane. This is Transmembrane protein 116 (TMEM116) from Homo sapiens (Human).